We begin with the raw amino-acid sequence, 103 residues long: V-type ATP synthase subunit F (103 aa).

It belongs to the V-ATPase F subunit family.

In terms of biological role, produces ATP from ADP in the presence of a proton gradient across the membrane. This is V-type ATP synthase subunit F from Clostridium botulinum (strain Alaska E43 / Type E3).